A 168-amino-acid polypeptide reads, in one-letter code: HTH-type transcriptional regulator IscR (168 aa).

In terms of domain architecture, HTH rrf2-type spans 2 to 131 (KLTSKGRYAV…DGISLGELMV (130 aa)). A DNA-binding region (H-T-H motif) is located at residues 28–51 (LADISERQGISLSYLEQLFSKLRK). The [2Fe-2S] cluster site is built by Cys-92, Cys-98, and Cys-104.

[2Fe-2S] cluster serves as cofactor.

In terms of biological role, regulates the transcription of several operons and genes involved in the biogenesis of Fe-S clusters and Fe-S-containing proteins. This Aliivibrio salmonicida (strain LFI1238) (Vibrio salmonicida (strain LFI1238)) protein is HTH-type transcriptional regulator IscR.